The sequence spans 251 residues: Cell division protein ZapD (251 aa).

The protein belongs to the ZapD family. Interacts with FtsZ.

It is found in the cytoplasm. Functionally, cell division factor that enhances FtsZ-ring assembly. Directly interacts with FtsZ and promotes bundling of FtsZ protofilaments, with a reduction in FtsZ GTPase activity. The protein is Cell division protein ZapD of Burkholderia cenocepacia (strain HI2424).